We begin with the raw amino-acid sequence, 316 residues long: Protein lifeguard 2 (316 aa).

Residues 1–53 (MTQGKLSVANKAPGTEGQQQVHGEKKEAPAVPSAPPSYEEATSGEGMKAGAFP) form a disordered region. Helical transmembrane passes span 106–126 (VYTILLIQLLVTLAVVALFTF), 138–158 (PGWYWASYAVFFATYLTLACC), and 165–185 (FPWNLILLTVFTLSMAYLTGM). N-linked (GlcNAc...) asparagine glycosylation is present at Asn-191. Helical transmembrane passes span 194–214 (SVLLCLGITALVCLSVTVFSF), 225–245 (GVLFVLPMTLFFSGLILAILL), 250–270 (VPWLHAVYAALGAGVFTLFLA), and 290–310 (IFGALNIYLDIIYIFTFFLQL).

Belongs to the BI1 family. LFG subfamily. As to quaternary structure, interacts with FAS/TNFRSF6 and BAX.

The protein resides in the cell membrane. Its subcellular location is the membrane raft. It is found in the postsynaptic cell membrane. Its function is as follows. Antiapoptotic protein which protects cells uniquely from Fas-induced apoptosis. Regulates Fas-mediated apoptosis in neurons by interfering with caspase-8 activation. Plays a role in cerebellar development by affecting cerebellar size, internal granular layer (IGL) thickness, and Purkinje cell (PC) development. The sequence is that of Protein lifeguard 2 (FAIM2) from Pongo abelii (Sumatran orangutan).